The primary structure comprises 269 residues: Putative hydro-lyase M446_2125 (269 aa).

Belongs to the D-glutamate cyclase family.

In Methylobacterium sp. (strain 4-46), this protein is Putative hydro-lyase M446_2125.